Reading from the N-terminus, the 147-residue chain is Large ribosomal subunit protein uL13 (147 aa).

The protein belongs to the universal ribosomal protein uL13 family. Part of the 50S ribosomal subunit.

Its function is as follows. This protein is one of the early assembly proteins of the 50S ribosomal subunit, although it is not seen to bind rRNA by itself. It is important during the early stages of 50S assembly. The protein is Large ribosomal subunit protein uL13 of Kineococcus radiotolerans (strain ATCC BAA-149 / DSM 14245 / SRS30216).